Consider the following 142-residue polypeptide: uncharacterized protein (142 aa).

The next 2 helical transmembrane spans lie at 75-97 and 107-124; these read VFFRKISFFTPLYFLLLSPYIVA and LSIVLPVAVLYFSAKLFY.

It localises to the cell membrane. This is an uncharacterized protein from Archaeoglobus fulgidus (strain ATCC 49558 / DSM 4304 / JCM 9628 / NBRC 100126 / VC-16).